A 440-amino-acid chain; its full sequence is Probable cytosolic iron-sulfur protein assembly protein 1 (440 aa).

WD repeat units follow at residues 12–51 (AHAE…SSDG), 71–110 (DHKR…SDDE), 148–187 (GHES…DFEC), 193–233 (EHSQ…WCIF), 278–317 (EEDE…PDSA), 326–379 (AHSR…SPSS), and 401–440 (HGVN…VVRD). Residues 107–116 (SDDEEEEDEG) are compositionally biased toward acidic residues. The segment at 107–137 (SDDEEEEDEGAQGVYKPAGVDSDGDGDGGKE) is disordered.

The protein belongs to the WD repeat CIA1 family.

Its function is as follows. Essential component of the cytosolic iron-sulfur (Fe/S) protein assembly machinery. Required for the maturation of extramitochondrial Fe/S proteins. This Cryptococcus neoformans var. neoformans serotype D (strain B-3501A) (Filobasidiella neoformans) protein is Probable cytosolic iron-sulfur protein assembly protein 1.